The primary structure comprises 312 residues: Methionyl-tRNA formyltransferase (312 aa).

109-112 (SLLP) contributes to the (6S)-5,6,7,8-tetrahydrofolate binding site.

This sequence belongs to the Fmt family.

It catalyses the reaction L-methionyl-tRNA(fMet) + (6R)-10-formyltetrahydrofolate = N-formyl-L-methionyl-tRNA(fMet) + (6S)-5,6,7,8-tetrahydrofolate + H(+). Attaches a formyl group to the free amino group of methionyl-tRNA(fMet). The formyl group appears to play a dual role in the initiator identity of N-formylmethionyl-tRNA by promoting its recognition by IF2 and preventing the misappropriation of this tRNA by the elongation apparatus. In Geotalea daltonii (strain DSM 22248 / JCM 15807 / FRC-32) (Geobacter daltonii), this protein is Methionyl-tRNA formyltransferase.